The following is a 210-amino-acid chain: CASP-like protein 3A1 (210 aa).

Topologically, residues 1 to 44 (MNGLKTPPEIGIQLPEAKVAAETGTMSGPLVPPRSDRSVRRGTD) are cytoplasmic. The chain crosses the membrane as a helical span at residues 45-65 (VAHVVLRFVCLLTSVIALSLM). The Extracellular portion of the chain corresponds to 66–94 (ATAKEAASISIYGFLLPVSSKWSFSDSFE). The chain crosses the membrane as a helical span at residues 95–115 (YLVGVSAAVAAHALLQLIISV). Residues 116 to 130 (SRLLRKSPVIPSRNH) lie on the Cytoplasmic side of the membrane. The chain crosses the membrane as a helical span at residues 131-151 (AWLIFAGDQAFAYAMLSAGSA). Topologically, residues 152-185 (ASGVTNLNRTGIRHSPLPNFCKPLRSFCDHVAAS) are extracellular. N-linked (GlcNAc...) asparagine glycosylation is present at Asn-159. The helical transmembrane segment at 186–206 (IAFTFFSCFLLATSAILDVIW) threads the bilayer. Residues 207–210 (LSKY) are Cytoplasmic-facing.

Belongs to the Casparian strip membrane proteins (CASP) family. As to quaternary structure, homodimer and heterodimers.

It is found in the cell membrane. The sequence is that of CASP-like protein 3A1 from Vitis vinifera (Grape).